Here is a 125-residue protein sequence, read N- to C-terminus: Protein ApaG (125 aa).

The ApaG domain maps to 1-125; the sequence is MIEQPRICVQ…FRLAIPALIH (125 aa).

This chain is Protein ApaG, found in Yersinia pseudotuberculosis serotype IB (strain PB1/+).